The chain runs to 239 residues: tRNA (guanine-N(1)-)-methyltransferase (239 aa).

S-adenosyl-L-methionine contacts are provided by residues Gly-112 and 131-136 (LGDFIL).

This sequence belongs to the RNA methyltransferase TrmD family. As to quaternary structure, homodimer.

The protein resides in the cytoplasm. It carries out the reaction guanosine(37) in tRNA + S-adenosyl-L-methionine = N(1)-methylguanosine(37) in tRNA + S-adenosyl-L-homocysteine + H(+). Specifically methylates guanosine-37 in various tRNAs. The protein is tRNA (guanine-N(1)-)-methyltransferase of Clostridium tetani (strain Massachusetts / E88).